The chain runs to 91 residues: Large ribosomal subunit protein uL23 (91 aa).

Belongs to the universal ribosomal protein uL23 family. Part of the 50S ribosomal subunit. Contacts protein L29, and trigger factor when it is bound to the ribosome.

In terms of biological role, one of the early assembly proteins it binds 23S rRNA. One of the proteins that surrounds the polypeptide exit tunnel on the outside of the ribosome. Forms the main docking site for trigger factor binding to the ribosome. The chain is Large ribosomal subunit protein uL23 from Staphylococcus saprophyticus subsp. saprophyticus (strain ATCC 15305 / DSM 20229 / NCIMB 8711 / NCTC 7292 / S-41).